Reading from the N-terminus, the 1548-residue chain is Multidrug resistance protein (1548 aa).

Over 1–238 the chain is Cytoplasmic; sequence MVDNGHVTIA…YHVWAQILPK (238 aa). An ABC transmembrane type-1 1 domain is found at 231–514; sequence VWAQILPKLL…IPIIISSILQ (284 aa). Residues 239–256 traverse the membrane as a helical segment; sequence LLSDVTALMLPVLLEYFV. Asn263 carries an N-linked (GlcNAc...) asparagine glycan. Helical transmembrane passes span 266-287, 349-367, 375-392, 463-480, and 500-519; these read WGWGLGLALTIFLTNVIQSCSA, VMYFWSAPLQLVLCLLLLI, VPGMAVLFVTLPLQAVIS, ATPTLVIAVVFILYHVSG, and VSFFMIPIIISSILQCFVSA. Residues 520–932 are Cytoplasmic-facing; sequence KRVTAFIECP…PWSTYVAYLK (413 aa). The region spanning 634–855 is the ABC transporter 1 domain; sequence VEEGDREYYQ…ALEETLRGEL (222 aa). 667 to 674 is an ATP binding site; the sequence is GSTGSGKS. A run of 4 helical transmembrane segments spans residues 933–950, 975–993, 1051–1070, and 1072–1088; these read SCGGLEAWGCLLATFALT, TYLYVYLFIVFLEIFGSPL, GYLYLLEYFFSMCSTVIIMV, and VQPFVLVAIVPCVYSYY. An ABC transmembrane type-1 2 domain is found at 940-1221; it reads WGCLLATFAL…LVRQVAMVEA (282 aa). Asn1095 and Asn1154 each carry an N-linked (GlcNAc...) asparagine glycan. 2 helical membrane passes run 1164 to 1182 and 1186 to 1205; these read LEFLSCVVTFMVAFIGVIG and GASSQNIGLISLSLTMSMTL. At 1206 to 1548 the chain is on the cytoplasmic side; it reads TETLNWLVRQ…RIVQPAVLSD (343 aa). An ABC transporter 2 domain is found at 1286–1521; it reads LVLEGVQMRY…HQSMFHSMVE (236 aa). 1320 to 1327 contacts ATP; sequence GRTGSGKS.

The protein belongs to the ABC transporter superfamily. ABCB family. Multidrug resistance exporter (TC 3.A.1.201) subfamily.

The protein resides in the membrane. It carries out the reaction ATP + H2O + xenobioticSide 1 = ADP + phosphate + xenobioticSide 2.. The chain is Multidrug resistance protein (PGPA) from Leishmania tarentolae (Sauroleishmania tarentolae).